A 428-amino-acid chain; its full sequence is Histidinol dehydrogenase (428 aa).

Substrate-binding residues include Ser-234, Gln-256, and His-259. Gln-256 and His-259 together coordinate Zn(2+). Active-site proton acceptor residues include Glu-323 and His-324. Residues His-324, Asp-357, Glu-411, and His-416 each coordinate substrate. Residue Asp-357 coordinates Zn(2+). His-416 is a Zn(2+) binding site.

This sequence belongs to the histidinol dehydrogenase family. Zn(2+) is required as a cofactor.

The enzyme catalyses L-histidinol + 2 NAD(+) + H2O = L-histidine + 2 NADH + 3 H(+). It functions in the pathway amino-acid biosynthesis; L-histidine biosynthesis; L-histidine from 5-phospho-alpha-D-ribose 1-diphosphate: step 9/9. Functionally, catalyzes the sequential NAD-dependent oxidations of L-histidinol to L-histidinaldehyde and then to L-histidine. The polypeptide is Histidinol dehydrogenase (Campylobacter jejuni (strain RM1221)).